Reading from the N-terminus, the 121-residue chain is Large ribosomal subunit protein bL19 (121 aa).

The protein belongs to the bacterial ribosomal protein bL19 family.

Functionally, this protein is located at the 30S-50S ribosomal subunit interface and may play a role in the structure and function of the aminoacyl-tRNA binding site. This Chloroherpeton thalassium (strain ATCC 35110 / GB-78) protein is Large ribosomal subunit protein bL19.